The primary structure comprises 307 residues: MTEQRLISELEQLVSEGRNPNTMHIDLLPTFDILREINYEDQTVPTAVEKVIPAIAAAVNQIVAAFQKGGRLIYMGAGTSGRLGVLDASECPPTFSVPSDMVIGLIAGGPEALQNSIEGAEDDPEQGRQALQDIKLTSTDVVVGIAVSGRTPYVIGGLNYAKSIGAVTIALSCNPNSIIAGIADLAISPVVGPEILTGSTRLKSGTAQKLILNMLTTASMIRIGKSYQNLMVDVHASNKKLVARAIRIVMQATGCTQADARRVLDQTGNDVKLAILMEITGMGIEEARAALQNAGGFLRKAISAKTA.

The region spanning 62–225 (IVAAFQKGGR…TTASMIRIGK (164 aa)) is the SIS domain. Residue Glu-90 is the Proton donor of the active site. Residue Glu-121 is part of the active site.

It belongs to the GCKR-like family. MurNAc-6-P etherase subfamily. As to quaternary structure, homodimer.

The enzyme catalyses N-acetyl-D-muramate 6-phosphate + H2O = N-acetyl-D-glucosamine 6-phosphate + (R)-lactate. Its pathway is amino-sugar metabolism; 1,6-anhydro-N-acetylmuramate degradation. The protein operates within amino-sugar metabolism; N-acetylmuramate degradation. It participates in cell wall biogenesis; peptidoglycan recycling. Specifically catalyzes the cleavage of the D-lactyl ether substituent of MurNAc 6-phosphate, producing GlcNAc 6-phosphate and D-lactate. Together with AnmK, is also required for the utilization of anhydro-N-acetylmuramic acid (anhMurNAc) either imported from the medium or derived from its own cell wall murein, and thus plays a role in cell wall recycling. The polypeptide is N-acetylmuramic acid 6-phosphate etherase (Rhizobium rhizogenes (strain K84 / ATCC BAA-868) (Agrobacterium radiobacter)).